Reading from the N-terminus, the 265-residue chain is Transcriptional activator TAF-1 (265 aa).

Disordered stretches follow at residues 1–133 (AHGG…SEKA) and 167–218 (THLK…KQAE). A compositionally biased stretch (low complexity) spans 35–46 (ASLSLDASAKSS). Composition is skewed to basic and acidic residues over residues 103–115 (RETT…DSKS) and 191–209 (NERE…ESAR). The 64-residue stretch at 194 to 257 (ELKREKRKQS…EKLKLENAAL (64 aa)) folds into the bZIP domain. Residues 196-215 (KREKRKQSNRESARRSRLRK) form a basic motif region. Residues 222–257 (LAIRVQSLTAENMTLKSEINKLMENSEKLKLENAAL) form a leucine-zipper region.

This sequence belongs to the bZIP family. In terms of tissue distribution, present mainly in roots. Barely detectable in stems and leaves.

The protein resides in the nucleus. Trans-activator of a beta-glucuronidase (GUS) reporter gene. Binds to a G-box-related element, (5'-GCAACGTGGC-3'). Also binds to the HEX-motif of wheat histone H3 promoter. The protein is Transcriptional activator TAF-1 (TAF1) of Nicotiana tabacum (Common tobacco).